The chain runs to 501 residues: Pentatricopeptide repeat-containing protein At4g16470 (501 aa).

PPR repeat units follow at residues 107–141, 142–172, 173–207, 208–242, 243–273, 274–308, 309–344, and 345–379; these read EPET…GFAL, NEYL…LKIR, DLIP…RIVP, DQYT…CIKS, NIIV…LSTR, NVIT…GCRP, NPVT…GIEP, and EGQH…EHPP. The tract at residues 380-455 is type E motif; it reads VWGSLLGACR…DPGYSQIELQ (76 aa). The tract at residues 456 to 486 is type E(+) motif; the sequence is GEVHRFMKDDTSHRLSEKIYKKVHEMTSFFM.

This sequence belongs to the PPR family. PCMP-E subfamily.

The sequence is that of Pentatricopeptide repeat-containing protein At4g16470 (PCMP-E12) from Arabidopsis thaliana (Mouse-ear cress).